Reading from the N-terminus, the 258-residue chain is Phosphoribosylaminoimidazole-succinocarboxamide synthase (258 aa).

Belongs to the SAICAR synthetase family.

It catalyses the reaction 5-amino-1-(5-phospho-D-ribosyl)imidazole-4-carboxylate + L-aspartate + ATP = (2S)-2-[5-amino-1-(5-phospho-beta-D-ribosyl)imidazole-4-carboxamido]succinate + ADP + phosphate + 2 H(+). It functions in the pathway purine metabolism; IMP biosynthesis via de novo pathway; 5-amino-1-(5-phospho-D-ribosyl)imidazole-4-carboxamide from 5-amino-1-(5-phospho-D-ribosyl)imidazole-4-carboxylate: step 1/2. The polypeptide is Phosphoribosylaminoimidazole-succinocarboxamide synthase (Maricaulis maris (strain MCS10) (Caulobacter maris)).